Here is a 122-residue protein sequence, read N- to C-terminus: Lithostathine (122 aa).

The first 26 residues, 1–26 (MLPSMSLPSLXWMLLSCLMLLSQVQG), serve as a signal peptide directing secretion. The propeptide occupies 27–37 (EDSPADTPSAR). The region spanning 38–122 (ISCPKGSMAY…LEPNAGGWEW (85 aa)) is the C-type lectin domain. C40 and C51 form a disulfide bridge.

In terms of assembly, cleaved to give an A chain and a B chain joined by a disulfide bond. As to expression, in pancreatic acinar cells.

The protein resides in the secreted. In terms of biological role, might act as an inhibitor of spontaneous calcium carbonate precipitation. The protein is Lithostathine (PTP) of Sus scrofa (Pig).